Consider the following 262-residue polypeptide: tRNA (guanine-N(1)-)-methyltransferase (262 aa).

Residues G111 and 130–135 (LGDFVL) each bind S-adenosyl-L-methionine.

The protein belongs to the RNA methyltransferase TrmD family. As to quaternary structure, homodimer.

Its subcellular location is the cytoplasm. The enzyme catalyses guanosine(37) in tRNA + S-adenosyl-L-methionine = N(1)-methylguanosine(37) in tRNA + S-adenosyl-L-homocysteine + H(+). Its function is as follows. Specifically methylates guanosine-37 in various tRNAs. The polypeptide is tRNA (guanine-N(1)-)-methyltransferase (Desulfitobacterium hafniense (strain Y51)).